The sequence spans 242 residues: uncharacterized protein (242 aa).

The HTH gntR-type domain maps to 17–85 (QRVDERIATT…HGSGSVVRDP (69 aa)). Positions 45–64 (ERDLAERLGVNRTSLRQGLA) form a DNA-binding region, H-T-H motif.

This is an uncharacterized protein from Mycobacterium tuberculosis (strain ATCC 25618 / H37Rv).